The primary structure comprises 198 residues: Formate-dependent nitrite reductase complex subunit NrfG (198 aa).

TPR repeat units lie at residues serine 73–asparagine 106 and isoleucine 144–arginine 177.

Required for formate-dependent nitrite reduction. Not required for the biosynthesis of any of the c-type cytochromes nor for the secretion of the periplasmic cytochromes. This chain is Formate-dependent nitrite reductase complex subunit NrfG (nrfG), found in Escherichia coli O157:H7.